The sequence spans 757 residues: RNA-directed RNA polymerase catalytic subunit (757 aa).

Residues 50 to 82 are disordered; that stretch reads SEKGKWTTNTETGAPQLNPIDGPLPEDNEPSGY. Positions 55-64 are enriched in polar residues; the sequence is WTTNTETGAP. 2 consecutive short sequence motifs (nuclear localization signal) follow at residues 187-195 and 203-216; these read RKRRVRDNM and RTIG…NKRS. The promoter-binding site stretch occupies residues 249–256; the sequence is RGFVYFVE. The 198-residue stretch at 286-483 folds into the RdRp catalytic domain; sequence VRKMMTNSQD…GINMTKKKSY (198 aa).

Belongs to the influenza viruses polymerase PB1 family. As to quaternary structure, influenza RNA polymerase is composed of three subunits: PB1, PB2 and PA. Interacts (via N-terminus) with PA (via C-terminus). Interacts (via C-terminus) with PB2 (via N-terminus); this interaction is essential for transcription initiation. Phosphorylated by host PRKCA.

It localises to the host nucleus. The protein localises to the host cytoplasm. The catalysed reaction is RNA(n) + a ribonucleoside 5'-triphosphate = RNA(n+1) + diphosphate. In terms of biological role, RNA-dependent RNA polymerase which is responsible for replication and transcription of virus RNA segments. The transcription of viral mRNAs occurs by a unique mechanism called cap-snatching. 5' methylated caps of cellular mRNAs are cleaved after 10-13 nucleotides by PA. In turn, these short capped RNAs are used as primers by PB1 for transcription of viral mRNAs. During virus replication, PB1 initiates RNA synthesis and copy vRNA into complementary RNA (cRNA) which in turn serves as a template for the production of more vRNAs. The protein is RNA-directed RNA polymerase catalytic subunit of Aves (Cat).